The chain runs to 244 residues: Protein TIFY 10b (244 aa).

A Tify domain is found at 97-132 (QEPEKRQLTIFYGGKVLVFNDFPADKAKGLMQLASK). The short motif at 185 to 210 (PIARKASLHRFLEKRKDRLNAKTPYQ) is the Jas element. The Nuclear localization signal motif lies at 187–194 (ARKASLHR). The segment at 193–244 (HRFLEKRKDRLNAKTPYQASPSDATPVKKEPESQPWLGLGPNAVVKPIERGQ) is disordered. Residues 194–204 (RFLEKRKDRLN) show a composition bias toward basic and acidic residues.

It belongs to the TIFY/JAZ family. Ubiquitinated. Targeted for degradation by the SCF(COI1) E3 ubiquitin ligase-proteasome pathway during jasmonate signaling.

It localises to the nucleus. In terms of biological role, repressor of jasmonate responses. The polypeptide is Protein TIFY 10b (Oryza sativa subsp. indica (Rice)).